Reading from the N-terminus, the 79-residue chain is Protein S100-G (79 aa).

The residue at position 2 (S2) is an N-acetylserine. 2 consecutive EF-hand domains span residues 13–48 and 45–79; these read IFQK…KASS and KASS…KLSQ. Residues Q26 and E31 each contribute to the Ca(2+) site. Phosphoserine is present on residues S42 and S47. Ca(2+) is bound by residues D58, N60, D62, E64, and E69.

Belongs to the S-100 family.

The sequence is that of Protein S100-G (S100g) from Rattus norvegicus (Rat).